Reading from the N-terminus, the 161-residue chain is DNA-directed RNA polymerase III subunit RPC9 (161 aa).

The tract at residues 75–96 (QEDEGEERESSGAKDAEKSGIS) is disordered. The segment covering 82 to 96 (RESSGAKDAEKSGIS) has biased composition (basic and acidic residues).

This sequence belongs to the eukaryotic RPC9 RNA polymerase subunit family. In terms of assembly, component of the RNA polymerase III (Pol III) complex consisting of 17 subunits. Forms a Pol III subcomplex with RPC25/RPC8. Interacts with BURF1/TDS4.

Its subcellular location is the nucleus. Functionally, DNA-dependent RNA polymerase catalyzes the transcription of DNA into RNA using the four ribonucleoside triphosphates as substrates. Specific peripheric component of RNA polymerase III which synthesizes small RNAs, such as 5S rRNA and tRNAs. The RPC25/RPC8-RPC17/RPC9 subcomplex may bind Pol III transcripts emerging from the adjacent exit pore during elongation. The protein is DNA-directed RNA polymerase III subunit RPC9 (RPC17) of Saccharomyces cerevisiae (strain ATCC 204508 / S288c) (Baker's yeast).